The primary structure comprises 562 residues: Efflux pump apf11 (562 aa).

2 stretches are compositionally biased toward low complexity: residues 1 to 10 and 18 to 30; these read MGDISAATKA and TPETNTTSSSSDT. The tract at residues 1–36 is disordered; that stretch reads MGDISAATKAPAPPTPATPETNTTSSSSDTDVQHEP. Residue Asn22 is glycosylated (N-linked (GlcNAc...) asparagine). The next 8 helical transmembrane spans lie at 46-66, 83-103, 110-130, 141-161, 169-189, 200-220, 249-269, and 278-298; these read LVIFALGLAILVGVLDATIVA, AWYGSAYLLVTGATQPIFGKI, KLVFLSSVAILEVGSLVCALA, AIAGLGAAGVISGGLIITALT, VYTAILGSLEGVGVIIGPIIG, WCFWINLPIGAVLCAILVFCL, GGLAIAGSITCLLLALEWGGT, and IIVLLVVFGVSLICVAVHQHW. Asn312 is a glycosylation site (N-linked (GlcNAc...) asparagine). Transmembrane regions (helical) follow at residues 317–337, 356–376, 382–404, 414–434, 447–467, and 516–536; these read MFLLCGLCFAGAQFTVLYYLP, LAMVVSVIVVSVIAGGSAGAV, FVFFATIFSSIGAGMLYTLHPSI, ILFGAGSGTGIQQAIVGVQVA, VMLVNTLAGSIFIAVSQTLFL, and FLIGLVLCSITVLTWPLIRWI.

The protein belongs to the major facilitator superfamily. TCR/Tet family.

Its subcellular location is the membrane. The protein operates within secondary metabolite biosynthesis. Efflux pump; part of the gene cluster that mediates the biosynthesis of the cyclic tetrapeptide apicidin F (APF). This is Efflux pump apf11 (apf11) from Gibberella fujikuroi (strain CBS 195.34 / IMI 58289 / NRRL A-6831) (Bakanae and foot rot disease fungus).